A 132-amino-acid polypeptide reads, in one-letter code: Small ribosomal subunit protein uS8 (132 aa).

The protein belongs to the universal ribosomal protein uS8 family. Part of the 30S ribosomal subunit. Contacts proteins S5 and S12.

In terms of biological role, one of the primary rRNA binding proteins, it binds directly to 16S rRNA central domain where it helps coordinate assembly of the platform of the 30S subunit. This is Small ribosomal subunit protein uS8 from Christiangramia forsetii (strain DSM 17595 / CGMCC 1.15422 / KT0803) (Gramella forsetii).